Consider the following 248-residue polypeptide: Tropomyosin alpha-4 chain (248 aa).

Alanine 2 bears the N-acetylalanine mark. A coiled-coil region spans residues 2–248; that stretch reads AGLNSLEAVK…DQTLNELNCI (247 aa). Serine 6 is modified (phosphoserine). Residues 15–47 are disordered; sequence QALQQQADEAEDRAQGLQRELDGERERREKAEG. Residues 33–47 show a composition bias toward basic and acidic residues; it reads RELDGERERREKAEG. 2 positions are modified to N6-acetyllysine: lysine 177 and lysine 215. Residue threonine 216 is modified to Phosphothreonine.

This sequence belongs to the tropomyosin family. Homodimer. Heterodimer of an alpha (TPM1, TPM3 or TPM4) and a beta (TPM2) chain. As to expression, detected in cardiac tissue and platelets, the form found in cardiac tissue is a higher molecular weight than the form found in platelets. Expressed at higher levels in the platelets of hypertensive patients with cardiac hypertrophy than in the platelets of hypertensive patients without cardiac hypertrophy (at protein level).

Its subcellular location is the cytoplasm. It localises to the cytoskeleton. Its function is as follows. Binds to actin filaments in muscle and non-muscle cells. Plays a central role, in association with the troponin complex, in the calcium dependent regulation of vertebrate striated muscle contraction. Smooth muscle contraction is regulated by interaction with caldesmon. In non-muscle cells is implicated in stabilizing cytoskeleton actin filaments. Binds calcium. Plays a role in platelet biogenesis. The polypeptide is Tropomyosin alpha-4 chain (TPM4) (Homo sapiens (Human)).